Reading from the N-terminus, the 198-residue chain is Type 1 fimbriae regulatory protein FimE (198 aa).

Residues S2–E184 enclose the Tyr recombinase domain. Residues R41, K66, H136, R139, and H162 contribute to the active site. The active-site O-(3'-phospho-DNA)-tyrosine intermediate is the Y171.

The protein belongs to the 'phage' integrase family.

Its function is as follows. FimE is one of the 2 regulatory proteins which control the phase variation of type 1 fimbriae in E.coli. These proteins mediate the periodic inversion of a 300bp DNA segment that harbors the promoter for the fimbrial structural gene, fimA. FimE switches fimA off. This Escherichia coli O6:H1 (strain CFT073 / ATCC 700928 / UPEC) protein is Type 1 fimbriae regulatory protein FimE (fimE).